Consider the following 364-residue polypeptide: Aminomethyltransferase (364 aa).

Belongs to the GcvT family. As to quaternary structure, the glycine cleavage system is composed of four proteins: P, T, L and H.

The enzyme catalyses N(6)-[(R)-S(8)-aminomethyldihydrolipoyl]-L-lysyl-[protein] + (6S)-5,6,7,8-tetrahydrofolate = N(6)-[(R)-dihydrolipoyl]-L-lysyl-[protein] + (6R)-5,10-methylene-5,6,7,8-tetrahydrofolate + NH4(+). In terms of biological role, the glycine cleavage system catalyzes the degradation of glycine. The protein is Aminomethyltransferase of Escherichia coli O81 (strain ED1a).